A 317-amino-acid polypeptide reads, in one-letter code: Melanocyte-stimulating hormone receptor (317 aa).

Residues 1-37 (MPMQEPQRRLLGPFNSTRTGAPHLELSANQTGPWCLH) are Extracellular-facing. Residues Asn-15 and Asn-29 are each glycosylated (N-linked (GlcNAc...) asparagine). A helical membrane pass occupies residues 38–63 (VSIPDGLFLSLGLVSLVENVLVVISI). Over 64 to 72 (AKNQNLHSP) the chain is Cytoplasmic. The chain crosses the membrane as a helical span at residues 73–93 (MYYFICCLALSDLLVSVSIVL). At 94 to 118 (ETTLILVLEAGALATRVTVVQQLDN) the chain is on the extracellular side. The helical transmembrane segment at 119–140 (VIDVLICASMVSSLCFLGAIAV) threads the bilayer. Residues 141 to 163 (DRYISIFYALRYHSIVTLPRARW) lie on the Cytoplasmic side of the membrane. Residues 164 to 183 (AIVAIWVASISSSTLFVAYY) traverse the membrane as a helical segment. Residues 184–191 (NHTAVLLC) are Extracellular-facing. The chain crosses the membrane as a helical span at residues 192–211 (LVTFFLATLALMVVLYVHML). Residues 212-240 (ARAHQHAQAIAQLHKRQHLVHQGFRLKGA) lie on the Cytoplasmic side of the membrane. A helical transmembrane segment spans residues 241–266 (ATLTILLGIFFLCWGPFFLYLTLIVL). Topologically, residues 267 to 279 (CPKHPTCGCFFKN) are extracellular. A helical transmembrane segment spans residues 280-300 (LNLFLALIIFNSIVDPLIYAF). The Cytoplasmic segment spans residues 301–317 (RSQELRMTLKEVLLCSW). Cys-315 is lipidated: S-palmitoyl cysteine.

This sequence belongs to the G-protein coupled receptor 1 family. Interacts with MGRN1, but does not undergo MGRN1-mediated ubiquitination; this interaction competes with GNAS-binding and thus inhibits agonist-induced cAMP production. Interacts with OPN3; the interaction results in a decrease in MC1R-mediated cAMP signaling and ultimately a decrease in melanin production in melanocytes.

The protein resides in the cell membrane. Receptor for MSH (alpha, beta and gamma) and ACTH. The activity of this receptor is mediated by G proteins which activate adenylate cyclase. Mediates melanogenesis, the production of eumelanin (black/brown) and phaeomelanin (red/yellow), via regulation of cAMP signaling in melanocytes. The sequence is that of Melanocyte-stimulating hormone receptor (MC1R) from Chaetodipus penicillatus (Desert pocket mouse).